Reading from the N-terminus, the 150-residue chain is Cytochrome c-type biogenesis protein CcmE (150 aa).

Residues 1–7 (MTRKQKR) are Cytoplasmic-facing. Residues 8–28 (LAIIGGGVAFLTAAVLLVMFA) form a helical; Signal-anchor for type II membrane protein membrane-spanning segment. Topologically, residues 29-150 (FSQAVAYFYV…VTLGGEENIR (122 aa)) are periplasmic. 2 residues coordinate heme: histidine 123 and tyrosine 127.

Belongs to the CcmE/CycJ family.

The protein localises to the cell inner membrane. Heme chaperone required for the biogenesis of c-type cytochromes. Transiently binds heme delivered by CcmC and transfers the heme to apo-cytochromes in a process facilitated by CcmF and CcmH. The sequence is that of Cytochrome c-type biogenesis protein CcmE from Rhizobium meliloti (strain 1021) (Ensifer meliloti).